The sequence spans 185 residues: dCTP deaminase (185 aa).

Residues 108-113, 132-134, Q153, Y167, and Q177 each bind dCTP; these read KSTYAR and TLE. E134 functions as the Proton donor/acceptor in the catalytic mechanism.

Belongs to the dCTP deaminase family. As to quaternary structure, homotrimer.

The enzyme catalyses dCTP + H2O + H(+) = dUTP + NH4(+). It participates in pyrimidine metabolism; dUMP biosynthesis; dUMP from dCTP (dUTP route): step 1/2. Its function is as follows. Catalyzes the deamination of dCTP to dUTP. The protein is dCTP deaminase of Pelagibacter ubique (strain HTCC1062).